Reading from the N-terminus, the 926-residue chain is Bifunctional uridylyltransferase/uridylyl-removing enzyme (926 aa).

Residues Met1 to Lys379 are uridylyltransferase. The segment at Gln380–Thr736 is uridylyl-removing. The region spanning Val496–Leu618 is the HD domain. ACT domains are found at residues Met737–Ser814 and Val849–Lys926.

The protein belongs to the GlnD family. Requires Mg(2+) as cofactor.

The catalysed reaction is [protein-PII]-L-tyrosine + UTP = [protein-PII]-uridylyl-L-tyrosine + diphosphate. It catalyses the reaction [protein-PII]-uridylyl-L-tyrosine + H2O = [protein-PII]-L-tyrosine + UMP + H(+). With respect to regulation, uridylyltransferase (UTase) activity is inhibited by glutamine, while glutamine activates uridylyl-removing (UR) activity. Modifies, by uridylylation and deuridylylation, the PII regulatory proteins (GlnB and homologs), in response to the nitrogen status of the cell that GlnD senses through the glutamine level. Under low glutamine levels, catalyzes the conversion of the PII proteins and UTP to PII-UMP and PPi, while under higher glutamine levels, GlnD hydrolyzes PII-UMP to PII and UMP (deuridylylation). Thus, controls uridylylation state and activity of the PII proteins, and plays an important role in the regulation of nitrogen assimilation and metabolism. In Zymomonas mobilis subsp. mobilis (strain ATCC 31821 / ZM4 / CP4), this protein is Bifunctional uridylyltransferase/uridylyl-removing enzyme.